Consider the following 424-residue polypeptide: GTPase Obg (424 aa).

The 160-residue stretch at 1 to 160 (MFDRVEIRIK…YELILELKLI (160 aa)) folds into the Obg domain. Residues 161–328 (ADVAIIGYPN…LLDKVAEKLA (168 aa)) enclose the OBG-type G domain. Residues 167 to 174 (GYPNVGKS), 192 to 196 (FTTLS), 213 to 216 (EVPG), 280 to 283 (NKID), and 309 to 311 (SAL) each bind GTP. Residues S174 and T194 each contribute to the Mg(2+) site. Residues 349–424 (PAPKGKMGFH…IITGRLEWYL (76 aa)) enclose the OCT domain.

This sequence belongs to the TRAFAC class OBG-HflX-like GTPase superfamily. OBG GTPase family. As to quaternary structure, monomer. Requires Mg(2+) as cofactor.

Its subcellular location is the cytoplasm. In terms of biological role, an essential GTPase which binds GTP, GDP and possibly (p)ppGpp with moderate affinity, with high nucleotide exchange rates and a fairly low GTP hydrolysis rate. Plays a role in control of the cell cycle, stress response, ribosome biogenesis and in those bacteria that undergo differentiation, in morphogenesis control. This is GTPase Obg from Dehalococcoides mccartyi (strain ATCC BAA-2266 / KCTC 15142 / 195) (Dehalococcoides ethenogenes (strain 195)).